Here is a 386-residue protein sequence, read N- to C-terminus: MKFVDEAKIKVDAGDGGNGCIGFRTEKYIPRGGPNGGDGGDGGDVYLQADENLNTLVDFRFVRFYDAERGENGQTRDCTGSRGKDKIIQVPVGTRCRDADTGEVLGDLTRDGQQLMVAKGGFHGLGNARFKSSTNRAPRQKTDGTPGEVRNLLLELLLLADVGMLGLPNAGKSTFIRSVSAAKPKVADYPFTTLVPNLGVVSMGYGRSFVIADIPGLIEGASDGAGLGARFLRHLERCRVLLHTIDLLPADGSDPAENALVIIAELKKHSPKLASKPRWLVFNKTDLLLEDEAELVIERVKEALEWDGPVYKVAAISKTGTDTLCRDVVEYLEELPAEFTPEEERQQVEFQWDDYHKTAIEELDDDSDDDDWSEDDEMMEVIYTKE.

In terms of domain architecture, Obg spans 1 to 159 (MKFVDEAKIK…RNLLLELLLL (159 aa)). In terms of domain architecture, OBG-type G spans 160-333 (ADVGMLGLPN…LCRDVVEYLE (174 aa)). GTP contacts are provided by residues 166-173 (GLPNAGKS), 191-195 (FTTLV), 213-216 (DIPG), 283-286 (NKTD), and 314-316 (AAI). Ser-173 and Thr-193 together coordinate Mg(2+).

The protein belongs to the TRAFAC class OBG-HflX-like GTPase superfamily. OBG GTPase family. Monomer. Requires Mg(2+) as cofactor.

It localises to the cytoplasm. In terms of biological role, an essential GTPase which binds GTP, GDP and possibly (p)ppGpp with moderate affinity, with high nucleotide exchange rates and a fairly low GTP hydrolysis rate. Plays a role in control of the cell cycle, stress response, ribosome biogenesis and in those bacteria that undergo differentiation, in morphogenesis control. This chain is GTPase Obg, found in Psychromonas ingrahamii (strain DSM 17664 / CCUG 51855 / 37).